The primary structure comprises 313 residues: tRNA dimethylallyltransferase (313 aa).

ATP is bound at residue 14-21 (GPTASGKT). 16–21 (TASGKT) is a binding site for substrate. 2 interaction with substrate tRNA regions span residues 39 to 42 (DSAL) and 163 to 167 (QRIGR).

The protein belongs to the IPP transferase family. As to quaternary structure, monomer. The cofactor is Mg(2+).

The catalysed reaction is adenosine(37) in tRNA + dimethylallyl diphosphate = N(6)-dimethylallyladenosine(37) in tRNA + diphosphate. Functionally, catalyzes the transfer of a dimethylallyl group onto the adenine at position 37 in tRNAs that read codons beginning with uridine, leading to the formation of N6-(dimethylallyl)adenosine (i(6)A). In Thiobacillus denitrificans (strain ATCC 25259 / T1), this protein is tRNA dimethylallyltransferase.